A 61-amino-acid polypeptide reads, in one-letter code: Photosystem II reaction center X protein (61 aa).

Residues Ile-26–Phe-46 traverse the membrane as a helical segment.

Belongs to the PsbX family. Type 2 subfamily. In terms of assembly, PSII consists of a core antenna complex that captures photons, and an electron transfer chain that converts photonic excitation into a charge separation. PSII forms dimeric complexes.

Its subcellular location is the cellular thylakoid membrane. Functionally, involved in the binding and/or turnover of quinones at the Q(B) site of Photosystem II. This chain is Photosystem II reaction center X protein, found in Prochlorococcus marinus (strain MIT 9215).